The chain runs to 170 residues: Protein SprT (170 aa).

One can recognise a SprT-like domain in the interval 25-165 (SEQFFDRTFA…QYCKGRLEPV (141 aa)). His-78 is a Zn(2+) binding site. Residue Glu-79 is part of the active site. A Zn(2+)-binding site is contributed by His-82.

The protein belongs to the SprT family. Zn(2+) serves as cofactor.

It is found in the cytoplasm. This is Protein SprT from Actinobacillus succinogenes (strain ATCC 55618 / DSM 22257 / CCUG 43843 / 130Z).